We begin with the raw amino-acid sequence, 565 residues long: uncharacterized protein (565 aa).

Transmembrane regions (helical) follow at residues 4–26, 33–55, 68–90, 97–119, and 162–184; these read FVQF…AVWV, GYGL…VGAA, SLLY…VNAL, YAIL…TQFF, and ISAM…IILL. RCK C-terminal domains are found at residues 210–295 and 296–379; these read PNVD…LGPE and VPDA…IFGV. A run of 5 helical transmembrane segments spans residues 389–411, 415–432, 453–472, 482–504, and 539–561; these read LLTL…PAFG, GLGN…VSSI, LGLI…DLLT, IFIV…GFHI, and WLGF…YFAM.

The protein belongs to the AAE transporter (TC 2.A.81) family.

The protein resides in the cell membrane. This is an uncharacterized protein from Bordetella bronchiseptica (strain ATCC BAA-588 / NCTC 13252 / RB50) (Alcaligenes bronchisepticus).